The chain runs to 260 residues: Large ribosomal subunit protein eL8A (260 aa).

Residues 1–34 (MPSSKKVAPAPLATKSKASTSTKNPLFESTPKNF) form a disordered region.

This sequence belongs to the eukaryotic ribosomal protein eL8 family. Component of the large ribosomal subunit. Mature ribosomes consist of a small (40S) and a large (60S) subunit. The 40S subunit contains about 32 different proteins and 1 molecule of RNA (18S). The 60S subunit contains 45 different proteins and 3 molecules of RNA (25S, 5.8S and 5S).

Its subcellular location is the cytoplasm. In terms of biological role, component of the ribosome, a large ribonucleoprotein complex responsible for the synthesis of proteins in the cell. The small ribosomal subunit (SSU) binds messenger RNAs (mRNAs) and translates the encoded message by selecting cognate aminoacyl-transfer RNA (tRNA) molecules. The large subunit (LSU) contains the ribosomal catalytic site termed the peptidyl transferase center (PTC), which catalyzes the formation of peptide bonds, thereby polymerizing the amino acids delivered by tRNAs into a polypeptide chain. The nascent polypeptides leave the ribosome through a tunnel in the LSU and interact with protein factors that function in enzymatic processing, targeting, and the membrane insertion of nascent chains at the exit of the ribosomal tunnel. This is Large ribosomal subunit protein eL8A from Candida albicans (strain SC5314 / ATCC MYA-2876) (Yeast).